A 209-amino-acid chain; its full sequence is MATQSNKEAFLGGFKKLLNEQWQADVRLKAGDSDETTSIFAHKLVLVARSEVFKKILESDEFKASSKQMETVTLSEMKHEELEAFVEFIYRVDGSICSASLKKHARSLFHAADKYEIPHLRDLCRNELISSLNSSNALSILELAQIPFDKALNDPAFTTIITNISTIASGDEFKLFVANHPNLAVDIMKASITRLSTSRKICGYCNRYY.

The region spanning 24–98 (ADVRLKAGDS…IYRVDGSICS (75 aa)) is the BTB domain.

It functions in the pathway protein modification; protein ubiquitination. Its function is as follows. May act as a substrate-specific adapter of an E3 ubiquitin-protein ligase complex (CUL3-RBX1-BTB) which mediates the ubiquitination and subsequent proteasomal degradation of target proteins. This is Putative BTB/POZ domain-containing protein At2g40450 from Arabidopsis thaliana (Mouse-ear cress).